Here is a 176-residue protein sequence, read N- to C-terminus: MAERSTGLPSQRQVVELLDGEFTRAGYDLEDVVIDAASRPPRITVVTDSDHGLDLDSVAELSRIASELLDGLDSAPYVLEVTSPGVDRPLTTEKHYRRARGRLAEITLTDGSVLTGRIGGVADGTVGVVVREGRSNLSVREIALNAIAKAVVQVEFSPPSPRELELAGVSRKEARA.

The protein belongs to the RimP family.

The protein localises to the cytoplasm. In terms of biological role, required for maturation of 30S ribosomal subunits. The polypeptide is Ribosome maturation factor RimP (Mycolicibacterium vanbaalenii (strain DSM 7251 / JCM 13017 / BCRC 16820 / KCTC 9966 / NRRL B-24157 / PYR-1) (Mycobacterium vanbaalenii)).